A 63-amino-acid chain; its full sequence is UPF0434 protein Sde_1297 (63 aa).

Belongs to the UPF0434 family.

In Saccharophagus degradans (strain 2-40 / ATCC 43961 / DSM 17024), this protein is UPF0434 protein Sde_1297.